The primary structure comprises 152 residues: MEAVLNELVSVEDLLKFEKKFQSEKAAGSVSKSTQFEYAWCLVRSKYNDDIRKGIVLLEELLPKGSKEEQRDYVFYLAVGNYRLKEYEKALKYVRGLLQTEPQNNQAKELERLIDKAMKKDGLVGMAIVGGMALGVAGLAGLIGLAVSKSKS.

Met1 is modified (N-acetylmethionine). Over 1–122 (MEAVLNELVS…LIDKAMKKDG (122 aa)) the chain is Cytoplasmic. Residue Ser10 is modified to Phosphoserine. The stretch at 71 to 104 (RDYVFYLAVGNYRLKEYEKALKYVRGLLQTEPQN) is one TPR repeat. Residues 123-143 (LVGMAIVGGMALGVAGLAGLI) form a helical membrane-spanning segment. At 144-152 (GLAVSKSKS) the chain is on the mitochondrial intermembrane side.

The protein belongs to the FIS1 family. As to quaternary structure, interacts with DNM1L/DLP1 through the TPR region; may form part of a larger protein complex at the endoplasmic reticulum-mitochondrial interface during mitochondrial fission. Interacts with MARCHF5. Interacts with MIEF1. Interacts with PEX11A, PEX11B and PEX11G. Post-translationally, ubiquitinated by MARCHF5.

Its subcellular location is the mitochondrion outer membrane. It localises to the peroxisome membrane. Functionally, involved in the fragmentation of the mitochondrial network and its perinuclear clustering. Plays a minor role in the recruitment and association of the fission mediator dynamin-related protein 1 (DNM1L) to the mitochondrial surface and mitochondrial fission. May not be essential for the assembly of functional fission complexes and the subsequent membrane scission event. Also mediates peroxisomal fission. May act when the products of fission are directed toward mitochondrial homeostasis, mitophagy, or apoptosis. Can induce cytochrome c release from the mitochondrion to the cytosol, ultimately leading to apoptosis. The chain is Mitochondrial fission 1 protein (FIS1) from Homo sapiens (Human).